The sequence spans 395 residues: Flap endonuclease 1 (395 aa).

The segment at 1–104 (MGIKHLYQII…GELAKRIARK (104 aa)) is N-domain. Asp34 is a binding site for Mg(2+). Positions 47 and 70 each coordinate DNA. Asp86 is a Mg(2+) binding site. The tract at residues 103-123 (RKQEAAEQHEEAKETGTTEDV) is disordered. The segment at 122–253 (DVEKFSRRTV…NTALKLIRDH (132 aa)) is I-domain. Positions 158, 160, 179, and 181 each coordinate Mg(2+). DNA is bound at residue Glu158. Residues Gly231 and Asp233 each contribute to the DNA site. Asp233 contacts Mg(2+). The segment at 341 to 349 (QQSRLEGFF) is interaction with PCNA. The span at 356–389 (DEEKASLKRKHEEKLEAAKKKKKEDAKAKREAKS) shows a compositional bias: basic and acidic residues. The segment at 356–395 (DEEKASLKRKHEEKLEAAKKKKKEDAKAKREAKSRPKGTA) is disordered.

This sequence belongs to the XPG/RAD2 endonuclease family. FEN1 subfamily. As to quaternary structure, interacts with PCNA. Three molecules of FEN1 bind to one PCNA trimer with each molecule binding to one PCNA monomer. PCNA stimulates the nuclease activity without altering cleavage specificity. Mg(2+) serves as cofactor. Post-translationally, phosphorylated. Phosphorylation upon DNA damage induces relocalization to the nuclear plasma.

Its subcellular location is the nucleus. It localises to the nucleolus. The protein localises to the nucleoplasm. The protein resides in the mitochondrion. Its function is as follows. Structure-specific nuclease with 5'-flap endonuclease and 5'-3' exonuclease activities involved in DNA replication and repair. During DNA replication, cleaves the 5'-overhanging flap structure that is generated by displacement synthesis when DNA polymerase encounters the 5'-end of a downstream Okazaki fragment. It enters the flap from the 5'-end and then tracks to cleave the flap base, leaving a nick for ligation. Also involved in the long patch base excision repair (LP-BER) pathway, by cleaving within the apurinic/apyrimidinic (AP) site-terminated flap. Acts as a genome stabilization factor that prevents flaps from equilibrating into structures that lead to duplications and deletions. Also possesses 5'-3' exonuclease activity on nicked or gapped double-stranded DNA, and exhibits RNase H activity. Also involved in replication and repair of rDNA and in repairing mitochondrial DNA. This is Flap endonuclease 1 from Uncinocarpus reesii (strain UAMH 1704).